The chain runs to 60 residues: Large ribosomal subunit protein bL32 (60 aa).

This sequence belongs to the bacterial ribosomal protein bL32 family.

This Borrelia duttonii (strain Ly) protein is Large ribosomal subunit protein bL32.